The sequence spans 1234 residues: DNA-directed RNA polymerase subunit beta (1234 aa).

Belongs to the RNA polymerase beta chain family. The RNAP catalytic core consists of 2 alpha, 1 beta, 1 beta' and 1 omega subunit. When a sigma factor is associated with the core the holoenzyme is formed, which can initiate transcription.

The catalysed reaction is RNA(n) + a ribonucleoside 5'-triphosphate = RNA(n+1) + diphosphate. Its function is as follows. DNA-dependent RNA polymerase catalyzes the transcription of DNA into RNA using the four ribonucleoside triphosphates as substrates. The chain is DNA-directed RNA polymerase subunit beta from Clostridium perfringens (strain ATCC 13124 / DSM 756 / JCM 1290 / NCIMB 6125 / NCTC 8237 / Type A).